Reading from the N-terminus, the 561-residue chain is Arginine--tRNA ligase (561 aa).

The 'HIGH' region signature appears at 129–139 (ANPTGPLHVGH).

Belongs to the class-I aminoacyl-tRNA synthetase family. Monomer.

The protein localises to the cytoplasm. It catalyses the reaction tRNA(Arg) + L-arginine + ATP = L-arginyl-tRNA(Arg) + AMP + diphosphate. The chain is Arginine--tRNA ligase from Bordetella petrii (strain ATCC BAA-461 / DSM 12804 / CCUG 43448).